We begin with the raw amino-acid sequence, 809 residues long: Bifunctional enzyme MurC/Ddl (809 aa).

A UDP-N-acetylmuramate--alanine ligase region spans residues 1–450; that stretch reads MKGTPQYHFI…GEALKDFNPK (450 aa). ATP contacts are provided by residues 111–117 and 606–661; these read GSHGKTG and IETF…SREI. A D-alanine--D-alanine ligase region spans residues 451-809; it reads KLSIGLVCGG…FTKEQDLVKR (359 aa). The ATP-grasp domain maps to 573 to 784; that stretch reads KRIASAVGVP…QEQIVDHFII (212 aa). 3 residues coordinate Mg(2+): D738, E751, and N753.

The protein in the N-terminal section; belongs to the MurCDEF family. It in the C-terminal section; belongs to the D-alanine--D-alanine ligase family. Mg(2+) is required as a cofactor. Requires Mn(2+) as cofactor.

The protein localises to the cytoplasm. It catalyses the reaction UDP-N-acetyl-alpha-D-muramate + L-alanine + ATP = UDP-N-acetyl-alpha-D-muramoyl-L-alanine + ADP + phosphate + H(+). The enzyme catalyses 2 D-alanine + ATP = D-alanyl-D-alanine + ADP + phosphate + H(+). It functions in the pathway cell wall biogenesis; peptidoglycan biosynthesis. Its function is as follows. Cell wall formation. In Chlamydia pneumoniae (Chlamydophila pneumoniae), this protein is Bifunctional enzyme MurC/Ddl (murC/ddl).